Here is a 79-residue protein sequence, read N- to C-terminus: MSFEVFEKLEVKVQQAIDTITLLQMEIEELKEKNNTLSQEVQEAAGGREALVRENEQLKQEQHVWQDRLRALLGKMEEV.

The stretch at 6 to 78 (FEKLEVKVQQ…LRALLGKMEE (73 aa)) forms a coiled coil.

Belongs to the ZapB family. As to quaternary structure, homodimer. The ends of the coiled-coil dimer bind to each other, forming polymers. Interacts with FtsZ.

The protein resides in the cytoplasm. Its function is as follows. Non-essential, abundant cell division factor that is required for proper Z-ring formation. It is recruited early to the divisome by direct interaction with FtsZ, stimulating Z-ring assembly and thereby promoting cell division earlier in the cell cycle. Its recruitment to the Z-ring requires functional FtsA or ZipA. This chain is Cell division protein ZapB, found in Yersinia enterocolitica serotype O:8 / biotype 1B (strain NCTC 13174 / 8081).